We begin with the raw amino-acid sequence, 1439 residues long: Fanconi anemia group D2 protein (1439 aa).

A Glycyl lysine isopeptide (Lys-Gly) (interchain with G-Cter in ubiquitin) cross-link involves residue lysine 563.

This sequence belongs to the Fanconi anemia protein FANCD2 family. As to quaternary structure, homodimer; cannot be ubiquitinated and does not bind DNA. Part of a FANCI-FANCD2 heterodimeric complex that binds and scans dsDNA for DNA damage. Interacts directly with FANCE and FANCI. Interacts with USP1 and MEN1. The ubiquitinated form specifically interacts with BRCA1 and BLM. Both the nonubiquitinated and the monoubiquitinated forms interact with BRCA2; this interaction is mediated by phosphorylated FANCG and the complex also includes XCCR3. The ubiquitinated form specifically interacts with MTMR15/FAN1 (via UBZ-type zinc finger), leading to recruit MTMR15/FAN1 to sites of DNA damage. Interacts with DCLRE1B/Apollo. Interacts with POLN. Interacts with UHRF1 and UHRF2; these interactions promote FANCD2 activation. In terms of processing, monoubiquitinated on Lys-563 during S phase and upon genotoxic stress. Deubiquitinated by USP1 as cells enter G2/M, or once DNA repair is completed. Monoubiquitination prevents DNA release from the FANCI-FANCD2 complex. FANCD2 is only ubiquitinated in the FANCI-FANCD2 complex and the monoubiquitination of FANCD2 is promoted by phosphorylation of FANCI. Post-translationally, phosphorylated in response to various genotoxic stresses by ATM and/or ATR.

It is found in the nucleus. Its function is as follows. Required for maintenance of chromosomal stability. Promotes accurate and efficient pairing of homologs during meiosis. Involved in the repair of DNA double-strand breaks, both by homologous recombination and single-strand annealing. The FANCI-FANCD2 complex binds and scans double-stranded DNA (dsDNA) for DNA damage; this complex stalls at DNA junctions between double-stranded DNA and single-stranded DNA. May participate in S phase and G2 phase checkpoint activation upon DNA damage. Plays a role in preventing breakage and loss of missegregating chromatin at the end of cell division, particularly after replication stress. Required for the targeting, or stabilization, of BLM to non-centromeric abnormal structures induced by replicative stress. Promotes BRCA2/FANCD1 loading onto damaged chromatin. May also be involved in B-cell immunoglobulin isotype switching. This chain is Fanconi anemia group D2 protein, found in Gallus gallus (Chicken).